The sequence spans 263 residues: PDZ domain-containing protein 9 (263 aa).

Positions 30-109 constitute a PDZ domain; it reads QTKLTVGSMG…GTILQIKVYR (80 aa).

The sequence is that of PDZ domain-containing protein 9 (PDZD9) from Bos taurus (Bovine).